The sequence spans 140 residues: Putative pre-16S rRNA nuclease (140 aa).

This sequence belongs to the YqgF nuclease family.

The protein localises to the cytoplasm. In terms of biological role, could be a nuclease involved in processing of the 5'-end of pre-16S rRNA. The chain is Putative pre-16S rRNA nuclease from Parabacteroides distasonis (strain ATCC 8503 / DSM 20701 / CIP 104284 / JCM 5825 / NCTC 11152).